Consider the following 104-residue polypeptide: Antitoxin HigA-2 (104 aa).

Residues 45-98 form the HTH cro/C1-type domain; sequence IVSIREQFNMSRGVFARLLHTSSRTLENWEQGRSVPNGQAVTLLKLVQRHPETL. The segment at residues 56–75 is a DNA-binding region (H-T-H motif); that stretch reads RGVFARLLHTSSRTLENWEQ.

In terms of biological role, antitoxin component of a type II toxin-antitoxin (TA) system that counteracts the effect of the HigB-2 toxin. Binds to its own promoter and regulates transcription of the higB-2/higA-2 operon. The sequence is that of Antitoxin HigA-2 (higA-2) from Vibrio cholerae serotype O1 (strain ATCC 39315 / El Tor Inaba N16961).